The sequence spans 746 residues: Lysine-specific histone demethylase 1 homolog 2 (746 aa).

The interval 1-26 is disordered; that stretch reads MNSPASDETAPRRNRRKVSRKNYDEN. The region spanning 51-152 is the SWIRM domain; that stretch reads EKETETEALI…FGVSPLFAPY (102 aa). E189, R191, R197, and E569 together coordinate FAD.

Belongs to the flavin monoamine oxidase family. FAD serves as cofactor. As to expression, expressed in the shoot and root apical regions of young seedlings. Expressed in inflorescences.

In terms of biological role, probable histone demethylase that reduces the levels of histone H3 'Lys-4' methylation in chromatin of the floral repressor FLOWERING LOCUS C (FLC) and the sporophytically silenced floral repressor FWA. Seems to act in partial redundancy with FLOWERING LOCUS D (FLD) to repress FLC expression. Required for cytosine methylation of FWA. Controls primary seed dormancy by regulating DOG1 and abscisic acid signaling-related genes. The sequence is that of Lysine-specific histone demethylase 1 homolog 2 from Arabidopsis thaliana (Mouse-ear cress).